The following is a 502-amino-acid chain: MPLLSSSKLSMESRKEDSEGTAPAPPQKKLSCQCHHHCPEDSVNSTCSTDGYCFTIIEEDDSGGHLVTKGCLGLEGSDFQCRDTPIPHQRRSIECCTGQDYCNKHLHPTLPPLKNRDFAEGNIHHKALLISVTVCSILLVLIIIFCYFRYKRQEARPRYSIGLEQDETYIPPGESLKDLIEQSQSSGSGSGLPLLVQRTIAKQIQMVKQIGKGRYGEVWMGKWRGEKVAVKVFFTTEEASWFRETEIYQTVLMRHENILGFIAADIKGTGSWTQLYLITDYHENGSLYDYLKSTTLDTKGMLKLAYSSVSGLCHLHTGIFSTQGKPAIAHRDLKSKNILVKKNGTCCIADLGLAVKFISDTNEVDIPPNTRVGTKRYMPPEVLDESLNRNHFQSYIMADMYSFGLILWEIARRCVSGGIVEEYQLPYHDLVPSDPSYEDMREIVCIKRLRPSFPNRWSSDECLRQMGKLMMECWAHNPASRLTALRVKKTLAKMSESQDIKL.

Residues 1-10 are compositionally biased toward polar residues; it reads MPLLSSSKLS. The signal sequence occupies residues 1–13; sequence MPLLSSSKLSMES. A disordered region spans residues 1–27; that stretch reads MPLLSSSKLSMESRKEDSEGTAPAPPQ. The Extracellular portion of the chain corresponds to 14–126; it reads RKEDSEGTAP…DFAEGNIHHK (113 aa). 5 disulfides stabilise this stretch: Cys-32–Cys-53, Cys-34–Cys-38, Cys-47–Cys-71, Cys-81–Cys-95, and Cys-96–Cys-102. A glycan (N-linked (GlcNAc...) asparagine) is linked at Asn-44. The chain crosses the membrane as a helical span at residues 127-148; it reads ALLISVTVCSILLVLIIIFCYF. At 149-502 the chain is on the cytoplasmic side; sequence RYKRQEARPR…KMSESQDIKL (354 aa). In terms of domain architecture, GS spans 174–203; sequence ESLKDLIEQSQSSGSGSGLPLLVQRTIAKQ. The region spanning 204–494 is the Protein kinase domain; it reads IQMVKQIGKG…LRVKKTLAKM (291 aa). Residues 210–218 and Lys-231 each bind ATP; that span reads IGKGRYGEV. The active-site Proton acceptor is the Asp-332.

Belongs to the protein kinase superfamily. TKL Ser/Thr protein kinase family. TGFB receptor subfamily. Mg(2+) serves as cofactor. Mn(2+) is required as a cofactor. Autophosphorylated.

It localises to the cell membrane. It carries out the reaction L-threonyl-[receptor-protein] + ATP = O-phospho-L-threonyl-[receptor-protein] + ADP + H(+). The catalysed reaction is L-seryl-[receptor-protein] + ATP = O-phospho-L-seryl-[receptor-protein] + ADP + H(+). Functionally, on ligand binding, forms a receptor complex consisting of two type II and two type I transmembrane serine/threonine kinases. Type II receptors phosphorylate and activate type I receptors which autophosphorylate, then bind and activate SMAD transcription. Positively regulates chondrocyte differentiation. In Gallus gallus (Chicken), this protein is Bone morphogenetic protein receptor type-1B (BMPR1B).